The primary structure comprises 315 residues: Taste receptor type 2 member 129 (315 aa).

At 1–9 (MDGIIQIIS) the chain is on the extracellular side. A helical membrane pass occupies residues 10–30 (AFIVIIEIIIGWFGNGFIVLV). The Cytoplasmic segment spans residues 31-46 (NCMHWIKRRRISTVNQ). A helical membrane pass occupies residues 47–67 (ILTALAFSRIYLLLTVFTVIL). Over 68 to 101 (ASVQYSNILVTRREVKVIIFHLITSNHFSMWLAA) the chain is Extracellular. A helical transmembrane segment spans residues 102-122 (CLGLFYFLKIANFSNFIFVFL). The Cytoplasmic portion of the chain corresponds to 123–128 (KKRVNK). A helical transmembrane segment spans residues 129-149 (VVSGTLLMSLVFLFLNTLLIN). Over 150–185 (SYIDAQIDDYRGYLLYDFTSNITVSFYRVILVINNC) the chain is Extracellular. Asn170 is a glycosylation site (N-linked (GlcNAc...) asparagine). The chain crosses the membrane as a helical span at residues 186–206 (IFTSIPFALSQSTFLMLIFSL). Over 207–233 (WRHYKKMQQHAQRCRDTLTNAHIKVLQ) the chain is Cytoplasmic. The helical transmembrane segment at 234–254 (TMIMYVLLSAIFFLFLSMQIW) threads the bilayer. Topologically, residues 255–266 (RNKLMENILFIR) are extracellular. Residues 267 to 287 (FCETVAAVFPSGHSCVLIWGD) form a helical membrane-spanning segment. The Cytoplasmic portion of the chain corresponds to 288-315 (TNLRQTFLSVLWWLKHRFTLWVPKLYCR).

The protein belongs to the G-protein coupled receptor T2R family.

Its subcellular location is the membrane. Putative taste receptor which may play a role in the perception of bitterness. The chain is Taste receptor type 2 member 129 from Rattus norvegicus (Rat).